The following is a 673-amino-acid chain: Forkhead box protein O3 (673 aa).

The tract at residues 1–153 (MAEAPASPAP…SGQPRKCSSR (153 aa)) is disordered. Position 30 is a phosphoserine; by AMPK (S30). T32 bears the Phosphothreonine; by PKB/AKT1 mark. N6-methyllysine is present on K46. A compositionally biased stretch (acidic residues) spans 57–68 (IPEEEDDEDDED). A compositionally biased stretch (gly residues) spans 79-89 (IGGGGGSGTLG). The tract at residues 80–108 (GGGGGSGTLGSGLLLEDSARVLAPGGQDP) is required for mitochondrial import. At K149 the chain carries N6-methyllysine. Positions 157-251 (WGNLSYADLI…KSGKAPRRRA (95 aa)) form a DNA-binding region, fork-head. T179 is modified (phosphothreonine; by AMPK). S209 carries the phosphoserine; by STK4/MST1 modification. Position 215 is a phosphoserine; by MAPKAPK5 (S215). The residue at position 230 (K230) is an N6-methyllysine. The segment at 231 to 302 (SSWWIINPDG…GSPTSRSSDE (72 aa)) is disordered. K242 carries the post-translational modification N6-acetyllysine. A Nuclear localization signal motif is present at residues 242 to 259 (KSGKAPRRRAVSMDNSNK). S253 carries the phosphoserine; by PKB/AKT1 and MAPKAPK5 modification. The segment covering 261 to 272 (TKSRGRAAKKKA) has biased composition (basic residues). N6-methyllysine is present on residues K262 and K271. Phosphoserine is present on residues S280 and S284. Polar residues predominate over residues 283–298 (DSPSQLSKWPGSPTSR). At K290 the chain carries N6-methyllysine. Phosphoserine is present on S294. A Phosphoserine; by CaMK2A modification is found at S299. The mediates interaction with CHUK/IKKA and IKBKB/IKKB stretch occupies residues 300–673 (SDELDAWTDF…QASSQSWVPG (374 aa)). S311 is subject to Phosphoserine. Position 315 is a phosphoserine; by SGK1 (S315). 2 positions are modified to phosphoserine; by AMPK: S399 and S413. Position 419 is an N6-methyllysine (K419). S421 carries the post-translational modification Phosphoserine. Positions 536 to 587 (HQHQTQGALGGSRALSNSVSNMGLSESSSLGSAKHQQQSPVSQSMQTLSDSL) are disordered. Polar residues predominate over residues 549 to 582 (ALSNSVSNMGLSESSSLGSAKHQQQSPVSQSMQT). S551 carries the phosphoserine; by MAPKAPK5 modification. S555 carries the phosphoserine; by AMPK and MAPKAPK5 modification. 2 positions are modified to phosphoserine; by AMPK: S588 and S626. The residue at position 644 (S644) is a Phosphoserine; by IKKB.

In terms of assembly, upon metabolic stress, forms a complex composed of FOXO3, SIRT3 and mitochondrial RNA polymerase POLRMT; the complex is recruited to mtDNA in a SIRT3-dependent manner. Also forms a complex composed of FOXO3, SIRT3, TFAM and POLRMT. Interacts with SIRT2; the interaction occurs independently of SIRT2 deacetylase activity. Interacts with YWHAB/14-3-3-beta and YWHAZ/14-3-3-zeta, which are required for cytosolic sequestration. Upon oxidative stress, interacts with STK4/MST1, which disrupts interaction with YWHAB/14-3-3-beta and leads to nuclear translocation. Interacts with PIM1. Interacts with DDIT3/CHOP. Interacts (deacetylated form) with SKP2. Interacts with CHUK and IKBKB. Interacts with CAMK2A, CAMK2B and calcineurin A. Interacts with NUPR1; this interaction represses FOXO3 transactivation. In the presence of survival factors such as IGF1, phosphorylated on Thr-32 and Ser-253 by AKT1/PKB. This phosphorylated form then interacts with 14-3-3 proteins and is retained in the cytoplasm. Survival factor withdrawal induces dephosphorylation and promotes translocation to the nucleus where the dephosphorylated protein induces transcription of target genes and triggers apoptosis. Although AKT1/PKB doesn't appear to phosphorylate Ser-315 directly, it may activate other kinases that trigger phosphorylation at this residue. Phosphorylated by STK4/MST1 on Ser-209 upon oxidative stress, which leads to dissociation from YWHAB/14-3-3-beta and nuclear translocation. Phosphorylated by PIM1. Phosphorylation by AMPK leads to the activation of transcriptional activity without affecting subcellular localization. In response to metabolic stress, phosphorylated by AMPK on Ser-30 which mediates FOXO3 mitochondrial translocation. Phosphorylation by MAPKAPK5 promotes nuclear localization and DNA-binding, leading to induction of miR-34b and miR-34c expression, 2 post-transcriptional regulators of MYC that bind to the 3'UTR of MYC transcript and prevent its translation. Phosphorylated by CHUK/IKKA and IKBKB/IKKB. TNF-induced inactivation of FOXO3 requires its phosphorylation at Ser-644 by IKBKB/IKKB which promotes FOXO3 retention in the cytoplasm, polyubiquitination and ubiquitin-mediated proteasomal degradation. May be dephosphorylated by calcineurin A on Ser-299 which abolishes FOXO3 transcriptional activity. In cancer cells, ERK mediated-phosphorylation of Ser-12 is required for mitochondrial translocation of FOXO3 in response to metabolic stress or chemotherapeutic agents. Phosphorylation at Ser-253 promotes its degradation by the proteasome. Dephosphorylation at Ser-253 by protein phosphatase 2A (PPP2CA) promotes its stabilization; interaction with PPP2CA is enhanced by AMBRA1. Post-translationally, deacetylation by SIRT1 or SIRT2 stimulates interaction of FOXO3 with SKP2 and facilitates SCF(SKP2)-mediated FOXO3 ubiquitination and proteasomal degradation. Deacetylation by SIRT2 stimulates FOXO3-mediated transcriptional activity in response to oxidative stress. Deacetylated by SIRT3. Deacetylation by SIRT3 stimulates FOXO3-mediated mtDNA transcriptional activity in response to metabolic stress. In terms of processing, heavily methylated by SET9 which decreases stability, while moderately increasing transcriptional activity. The main methylation site is Lys-271. Methylation doesn't affect subcellular location. Polyubiquitinated. Ubiquitinated by a SCF complex containing SKP2, leading to proteasomal degradation. Post-translationally, the N-terminus is cleaved following import into the mitochondrion. In terms of tissue distribution, ubiquitous.

The protein localises to the cytoplasm. It localises to the cytosol. Its subcellular location is the nucleus. The protein resides in the mitochondrion matrix. It is found in the mitochondrion outer membrane. Its function is as follows. Transcriptional activator that recognizes and binds to the DNA sequence 5'-[AG]TAAA[TC]A-3' and regulates different processes, such as apoptosis and autophagy. Acts as a positive regulator of autophagy in skeletal muscle: in starved cells, enters the nucleus following dephosphorylation and binds the promoters of autophagy genes, such as GABARAP1L, MAP1LC3B and ATG12, thereby activating their expression, resulting in proteolysis of skeletal muscle proteins. Triggers apoptosis in the absence of survival factors, including neuronal cell death upon oxidative stress. Participates in post-transcriptional regulation of MYC: following phosphorylation by MAPKAPK5, promotes induction of miR-34b and miR-34c expression, 2 post-transcriptional regulators of MYC that bind to the 3'UTR of MYC transcript and prevent its translation. In response to metabolic stress, translocates into the mitochondria where it promotes mtDNA transcription. In response to metabolic stress, translocates into the mitochondria where it promotes mtDNA transcription. Also acts as a key regulator of chondrogenic commitment of skeletal progenitor cells in response to lipid availability: when lipids levels are low, translocates to the nucleus and promotes expression of SOX9, which induces chondrogenic commitment and suppresses fatty acid oxidation. Also acts as a key regulator of regulatory T-cells (Treg) differentiation by activating expression of FOXP3. This chain is Forkhead box protein O3, found in Homo sapiens (Human).